The following is a 115-amino-acid chain: MMSAKDTVKVMVVMLAICFLARSDGKPIKKRSVSEIQLMHNLGKHLSSLERVEWLRKKLQDVHNFVALGASIVHRDGGSQRPRKKEDNVLVESHQKSLGEADKAAVDVLIKAKPQ.

An N-terminal signal peptide occupies residues M1–G25. Positions K26–R31 are excised as a propeptide. Residues R51 to G69 are important for receptor binding. The segment at R75–L98 is disordered.

This sequence belongs to the parathyroid hormone family. In terms of assembly, interacts with PTH1R (via N-terminal extracellular domain).

It is found in the secreted. In terms of biological role, parathyroid hormone elevates calcium level by dissolving the salts in bone and preventing their renal excretion. Acts by binding to its receptor, PTH1R, activating G protein-coupled receptor signaling. Stimulates [1-14C]-2-deoxy-D-glucose (2DG) transport and glycogen synthesis in osteoblastic cells. This is Parathyroid hormone (PTH) from Sus scrofa (Pig).